Here is a 488-residue protein sequence, read N- to C-terminus: Tetratricopeptide repeat protein 23 (488 aa).

5 TPR repeats span residues 45–78 (LHLC…TRIC), 137–170 (LELF…SKEM), 186–219 (SRIK…TEIT), 228–261 (VQVL…TPQP), and 398–431 (AETY…ETFL).

Associated with the EvC complex composed of EFCAB7, IQCE, EVC2 and EVC.

Its subcellular location is the cell projection. The protein localises to the cilium. Its function is as follows. Participates positively in the ciliary Hedgehog (Hh) signaling. The sequence is that of Tetratricopeptide repeat protein 23 (Ttc23) from Mus musculus (Mouse).